Reading from the N-terminus, the 61-residue chain is Small ribosomal subunit protein uS14 (61 aa).

Residues Cys24, Cys27, Cys40, and Cys43 each contribute to the Zn(2+) site.

It belongs to the universal ribosomal protein uS14 family. Zinc-binding uS14 subfamily. In terms of assembly, part of the 30S ribosomal subunit. Contacts proteins S3 and S10. Zn(2+) serves as cofactor.

In terms of biological role, binds 16S rRNA, required for the assembly of 30S particles and may also be responsible for determining the conformation of the 16S rRNA at the A site. This is Small ribosomal subunit protein uS14 from Halalkalibacterium halodurans (strain ATCC BAA-125 / DSM 18197 / FERM 7344 / JCM 9153 / C-125) (Bacillus halodurans).